The chain runs to 212 residues: Coat protein (212 aa).

Belongs to the potexvirus capsid protein family.

The protein resides in the virion. Required for genome encapsidation. Forms ribonucleoprotein complexes along with TGB1 helicase and viral RNA. This Chenopodium album (Fat hen) protein is Coat protein.